The sequence spans 192 residues: Large ribosomal subunit protein bL9 (192 aa).

Residues 173-192 (ALRPEDFFDPEADGVDEDEA) form a disordered region. Positions 179-192 (FFDPEADGVDEDEA) are enriched in acidic residues.

The protein belongs to the bacterial ribosomal protein bL9 family.

Functionally, binds to the 23S rRNA. In Rhizobium leguminosarum bv. trifolii, this protein is Large ribosomal subunit protein bL9 (rplI).